We begin with the raw amino-acid sequence, 131 residues long: Actin-associated protein FAM107A (131 aa).

Residues 57 to 77 (VLEHRRRNQLIKKKEEELEAK) are a coiled coil. Residues 61 to 71 (RRRNQLIKKKE) carry the Nuclear localization signal motif.

Interacts with ACTB. Interacts with COMMD1; this interaction stabilizes COMMD1 in the nucleus. Interacts with MAP1A. Interacts with PRDX1. Interacts with F-actin.

Its subcellular location is the nucleus. The protein resides in the cytoplasm. It is found in the cytoskeleton. It localises to the stress fiber. The protein localises to the cell junction. Its subcellular location is the focal adhesion. The protein resides in the cell projection. It is found in the ruffle membrane. It localises to the synapse. Functionally, stress-inducible actin-binding protein that plays a role in synaptic and cognitive functions by modulating actin filamentous (F-actin) dynamics. Mediates polymerization of globular actin to F-actin. Also binds to, stabilizes and bundles F-actin. Involved in synaptic function by regulating neurite outgrowth in an actin-dependent manner and for the acquisition of hippocampus-dependent cognitive function, such as learning and long-term memory. Plays a role in the actin and microtubule cytoskeleton organization; negatively regulates focal adhesion (FA) assembly promoting malignant glial cell migration in an actin-, microtubule- and MAP1A-dependent manner. Also involved in neuroblastoma G1/S phase cell cycle progression and cell proliferation inhibition by stimulating ubiquitination of NF-kappa-B subunit RELA and NF-kappa-B degradation in a COMMD1- and actin-dependent manner. May play a role in tumor development. This Rattus norvegicus (Rat) protein is Actin-associated protein FAM107A.